A 1358-amino-acid chain; its full sequence is DNA-directed RNA polymerase subunit beta (1358 aa).

The span at 1033–1051 (QGLEDRKKEHEARFDDKKG) shows a compositional bias: basic and acidic residues. Residues 1033–1053 (QGLEDRKKEHEARFDDKKGKL) form a disordered region.

This sequence belongs to the RNA polymerase beta chain family. In terms of assembly, the RNAP catalytic core consists of 2 alpha, 1 beta, 1 beta' and 1 omega subunit. When a sigma factor is associated with the core the holoenzyme is formed, which can initiate transcription.

The enzyme catalyses RNA(n) + a ribonucleoside 5'-triphosphate = RNA(n+1) + diphosphate. DNA-dependent RNA polymerase catalyzes the transcription of DNA into RNA using the four ribonucleoside triphosphates as substrates. The polypeptide is DNA-directed RNA polymerase subunit beta (Marinobacter nauticus (strain ATCC 700491 / DSM 11845 / VT8) (Marinobacter aquaeolei)).